A 186-amino-acid polypeptide reads, in one-letter code: Lipid A acyltransferase PagP (186 aa).

Positions 1–25 (MNVSKYVAIFSFVFIQLISVGKVFA) are cleaved as a signal peptide. Residues His58, Asp101, and Ser102 contribute to the active site.

This sequence belongs to the lipid A palmitoyltransferase family. As to quaternary structure, homodimer.

It localises to the cell outer membrane. The catalysed reaction is a lipid A + a 1,2-diacyl-sn-glycero-3-phosphocholine = a hepta-acyl lipid A + a 2-acyl-sn-glycero-3-phosphocholine. It carries out the reaction a lipid IVA + a 1,2-diacyl-sn-glycero-3-phosphocholine = a lipid IVB + a 2-acyl-sn-glycero-3-phosphocholine. It catalyses the reaction a lipid IIA + a 1,2-diacyl-sn-glycero-3-phosphocholine = a lipid IIB + a 2-acyl-sn-glycero-3-phosphocholine. Functionally, transfers a fatty acid residue from the sn-1 position of a phospholipid to the N-linked hydroxyfatty acid chain on the proximal unit of lipid A or its precursors. The protein is Lipid A acyltransferase PagP of Shigella boydii serotype 4 (strain Sb227).